A 270-amino-acid chain; its full sequence is Thymidylate synthase (270 aa).

Residues Arg28 and 133–134 (RR) contribute to the dUMP site. Cys153 functions as the Nucleophile in the catalytic mechanism. DUMP is bound by residues 173–176 (RSAD), Asn184, and 214–216 (HIY). Asp176 contributes to the (6R)-5,10-methylene-5,6,7,8-tetrahydrofolate binding site. Ala269 is a (6R)-5,10-methylene-5,6,7,8-tetrahydrofolate binding site.

It belongs to the thymidylate synthase family. Bacterial-type ThyA subfamily. Homodimer.

The protein localises to the cytoplasm. It catalyses the reaction dUMP + (6R)-5,10-methylene-5,6,7,8-tetrahydrofolate = 7,8-dihydrofolate + dTMP. It participates in pyrimidine metabolism; dTTP biosynthesis. Functionally, catalyzes the reductive methylation of 2'-deoxyuridine-5'-monophosphate (dUMP) to 2'-deoxythymidine-5'-monophosphate (dTMP) while utilizing 5,10-methylenetetrahydrofolate (mTHF) as the methyl donor and reductant in the reaction, yielding dihydrofolate (DHF) as a by-product. This enzymatic reaction provides an intracellular de novo source of dTMP, an essential precursor for DNA biosynthesis. The sequence is that of Thymidylate synthase from Corynebacterium diphtheriae (strain ATCC 700971 / NCTC 13129 / Biotype gravis).